Reading from the N-terminus, the 352-residue chain is Organic solute transporter subunit alpha (352 aa).

The Extracellular portion of the chain corresponds to 1–45 (MDVAHPEEVTRFSPDILMEKFNVSEACFLPPPISIQLILQLTWLD). The N-linked (GlcNAc...) asparagine glycan is linked to Asn-22. Residues 46-66 (IGVFAALTAMTVLTIAIYLEI) form a helical membrane-spanning segment. Over 67–82 (VCYLMDKVKCPIKRKT) the chain is Cytoplasmic. Residues 83 to 103 (LMWNSAAPTVIAITSCLGLWV) traverse the membrane as a helical segment. Residues 104–108 (PRAIM) lie on the Extracellular side of the membrane. Residues 109–129 (FVDMAAAMYFGVGFYLMLLII) traverse the membrane as a helical segment. Over 130–173 (VQGYGGEEAMLQHLATHTIRISTGPCCCCCPCLPHIHLTRQKYK) the chain is Cytoplasmic. A helical transmembrane segment spans residues 174 to 194 (IFVLGAFQVAFLRPALFLLGV). Residues 195-210 (VLWTNGLYDPDDWSST) lie on the Extracellular side of the membrane. A helical membrane pass occupies residues 211 to 231 (SIFLWLNLFLGVSTILGLWPV). The Cytoplasmic portion of the chain corresponds to 232–250 (NVLFRHSKVLMADQKLTCK). A helical membrane pass occupies residues 251–271 (FALFQAILILSSLQNSIIGTL). Residues 272–294 (AGAGHIGCAPPYSARTRGQQMNN) lie on the Extracellular side of the membrane. The chain crosses the membrane as a helical span at residues 295–312 (QLLIIEMFFVGILTRISY). Residues 313 to 352 (RKRDDRPGHRHVGEVQQIVRECDQPAIADQQADHSSISHI) lie on the Cytoplasmic side of the membrane.

This sequence belongs to the OST-alpha family. In terms of assembly, interacts with slc51b. The Ost-alpha/Ost-beta complex is a heterodimer composed of alpha (slc51a) and beta (slc51b) subunit. Expressed in liver.

It is found in the cell membrane. The protein localises to the endoplasmic reticulum membrane. It catalyses the reaction taurocholate(out) = taurocholate(in). The enzyme catalyses prostaglandin E2(out) = prostaglandin E2(in). The catalysed reaction is estrone 3-sulfate(out) = estrone 3-sulfate(in). It carries out the reaction dehydroepiandrosterone 3-sulfate(out) = dehydroepiandrosterone 3-sulfate(in). It catalyses the reaction tauroursodeoxycholate(out) = tauroursodeoxycholate(in). The enzyme catalyses glycoursodeoxycholate(out) = glycoursodeoxycholate(in). The catalysed reaction is glycocholate(out) = glycocholate(in). It carries out the reaction taurochenodeoxycholate(out) = taurochenodeoxycholate(in). It catalyses the reaction glycochenodeoxycholate(out) = glycochenodeoxycholate(in). The enzyme catalyses taurodeoxycholate(out) = taurodeoxycholate(in). The catalysed reaction is glycodeoxycholate(out) = glycodeoxycholate(in). Essential component of the Ost-alpha/Ost-beta complex, a heterodimer that acts as the intestinal basolateral transporter responsible for the translocation of bile acids (such as taurocholate), steroids (such as estrone sulfate), and eicosanoids (such as prostaglandin E2). In Leucoraja erinaceus (Little skate), this protein is Organic solute transporter subunit alpha (slc51a).